Consider the following 376-residue polypeptide: Phytanoyl-CoA hydroxylase-interacting protein-like (376 aa).

Phosphoserine is present on residues S12 and S15. An N-linked (GlcNAc...) asparagine glycan is attached at N23. Phosphoserine is present on S25. Residue N37 is glycosylated (N-linked (GlcNAc...) asparagine). Residues V52–Y161 form the Fibronectin type-III domain.

It belongs to the PHYHIP family.

Its function is as follows. May play a role in the development of the central system. This Homo sapiens (Human) protein is Phytanoyl-CoA hydroxylase-interacting protein-like (PHYHIPL).